The sequence spans 115 residues: Protein V2 (115 aa).

The protein belongs to the geminiviridae protein AV2/V2 family. In terms of assembly, interacts with host SGS3.

It localises to the host cytoplasm. It is found in the host perinuclear region. Its function is as follows. Through its interaction with host SGS3, acts as a suppressor of RNA-mediated gene silencing, also known as post-transcriptional gene silencing (PTGS), a mechanism of plant viral defense that limits the accumulation of viral RNAs. This Tomato yellow leaf curl Sardinia virus (TYLCSV) protein is Protein V2.